A 326-amino-acid polypeptide reads, in one-letter code: Probable cell division protein WhiA (326 aa).

The H-T-H motif DNA-binding region spans 275–308 (SLDELGHHADPPMTKDAVAGRIRRLLAMADKKAV).

Belongs to the WhiA family.

Involved in cell division and chromosome segregation. The polypeptide is Probable cell division protein WhiA (Clavibacter michiganensis subsp. michiganensis (strain NCPPB 382)).